The following is a 306-amino-acid chain: Glutaminase (306 aa).

Substrate is bound by residues Ser-61, Asn-111, Glu-157, Asn-164, Tyr-188, Tyr-240, and Val-258.

The protein belongs to the glutaminase family. Homotetramer.

It catalyses the reaction L-glutamine + H2O = L-glutamate + NH4(+). The sequence is that of Glutaminase from Psychrobacter cryohalolentis (strain ATCC BAA-1226 / DSM 17306 / VKM B-2378 / K5).